The sequence spans 540 residues: Phenylalanine--tRNA ligase beta subunit (540 aa).

Residues 266–342 (LRPEKRTVSV…IAYGYDKIET (77 aa)) form the B5 domain. Mg(2+)-binding residues include Asp-320, Asp-326, Glu-329, and Asp-330.

Belongs to the phenylalanyl-tRNA synthetase beta subunit family. Type 2 subfamily. Tetramer of two alpha and two beta subunits. Requires Mg(2+) as cofactor.

It is found in the cytoplasm. It catalyses the reaction tRNA(Phe) + L-phenylalanine + ATP = L-phenylalanyl-tRNA(Phe) + AMP + diphosphate + H(+). In Methanocorpusculum labreanum (strain ATCC 43576 / DSM 4855 / Z), this protein is Phenylalanine--tRNA ligase beta subunit.